A 277-amino-acid chain; its full sequence is MEMO1 family protein TRQ2_0860 (277 aa).

The protein belongs to the MEMO1 family.

This is MEMO1 family protein TRQ2_0860 from Thermotoga sp. (strain RQ2).